Consider the following 560-residue polypeptide: Radial spoke head protein 3 homolog (560 aa).

2 disordered regions span residues 134–186 (RKRG…EEPM) and 225–249 (ARKR…PVEG). A compositionally biased stretch (polar residues) spans 153–162 (RAPSTYTYTS). The stretch at 215 to 239 (DSLELQRQREARKRALARKQAQEQL) forms a coiled coil. The residue at position 286 (Thr-286) is a Phosphothreonine; by MAPK1. Residues 331-385 (LEVMEEEELANLRASQREYEELRNSERAEVQRLEEQERRHREEKERRKKQQWEIM) adopt a coiled-coil conformation. Disordered regions lie at residues 354–375 (NSER…EEKE), 473–498 (HGED…ESLE), and 526–560 (DRRS…EELS).

It belongs to the flagellar radial spoke RSP3 family. As to quaternary structure, component of the axonemal radial spoke 1 (RS1) and 2 (RS2) complexes, at least composed of spoke head proteins RSPH1, RSPH3, RSPH9 and the cilia-specific component RSPH4A or sperm-specific component RSPH6A, spoke stalk proteins RSPH14, DNAJB13, DYDC1, ROPN1L and NME5, and the RS1 complex-specific anchor protein IQUB. Interacts with IQUB. Interacts with phosphorylated MAPK1. Interacts with MEK1. Interacts with PKA regulatory subunits PRKAR1A and PRKAR1B. Interacts with RSPH1. Interacts with RSPH4A. Interacts with RSPH6A. Interacts with RSPH9. Interacts with LRRC23.

It is found in the cytoplasm. The protein resides in the cytoskeleton. Its subcellular location is the cilium axoneme. It localises to the flagellum axoneme. Functions as part of axonemal radial spoke complexes that play an important part in the motility of sperm and cilia. Functions as a protein kinase A-anchoring protein that scaffolds the cAMP-dependent protein kinase holoenzyme. May serve as a point of convergence for MAPK and PKA signaling in cilia. The protein is Radial spoke head protein 3 homolog (RSPH3) of Homo sapiens (Human).